Reading from the N-terminus, the 406-residue chain is COP9 signalosome complex subunit 4 (406 aa).

Alanine 2 is modified (N-acetylalanine). N6-acetyllysine is present on lysine 25. The PCI domain occupies 197–366 (YRRKFIEAAQ…GIVHFETREA (170 aa)).

It belongs to the CSN4 family. As to quaternary structure, component of the CSN complex, composed of COPS1/GPS1, COPS2, COPS3, COPS4, COPS5, COPS6, COPS7 (COPS7A or COPS7B), COPS8 and COPS9. In the complex, it probably interacts directly with COPS1, COPS2, COPS3, COPS5, COPS6, COPS7 (COPS7A or COPS7B) and COPS8. Interacts with TOR1A; the interaction is direct and associates TOR1A and SNAPIN with the CSN complex. Interacts with STON2; controls STON2 neddylation levels. Interacts with ERCC6.

It localises to the cytoplasm. Its subcellular location is the nucleus. The protein resides in the cytoplasmic vesicle. It is found in the secretory vesicle. The protein localises to the synaptic vesicle. Its function is as follows. Component of the COP9 signalosome complex (CSN), a complex involved in various cellular and developmental processes. The CSN complex is an essential regulator of the ubiquitin (Ubl) conjugation pathway by mediating the deneddylation of the cullin subunits of SCF-type E3 ligase complexes, leading to decrease the Ubl ligase activity of SCF-type complexes such as SCF, CSA or DDB2. Also involved in the deneddylation of non-cullin subunits such as STON2. The complex is also involved in phosphorylation of p53/TP53, c-jun/JUN, IkappaBalpha/NFKBIA, ITPK1, IRF8/ICSBP and SNAPIN, possibly via its association with CK2 and PKD kinases. CSN-dependent phosphorylation of TP53 and JUN promotes and protects degradation by the Ubl system, respectively. This is COP9 signalosome complex subunit 4 (COPS4) from Bos taurus (Bovine).